We begin with the raw amino-acid sequence, 482 residues long: O-acyltransferase ausP (482 aa).

Residues His180 and Asp412 each act as proton acceptor in the active site.

The protein belongs to the plant acyltransferase family. As to quaternary structure, monomer.

The protein operates within secondary metabolite biosynthesis; terpenoid biosynthesis. O-acyltransferase; part of the gene cluster B that mediates the biosynthesis of the fungal meroterpenoid acetoxydehydroaustin. The first step of the pathway is the synthesis of 3,5-dimethylorsellinic acid by the polyketide synthase ausA. 3,5-dimethylorsellinic acid is then prenylated by the polyprenyl transferase ausN. Further epoxidation by the FAD-dependent monooxygenase ausM and cyclization by the probable terpene cyclase ausL lead to the formation of protoaustinoid A. Protoaustinoid A is then oxidized to spiro-lactone preaustinoid A3 by the combined action of the FAD-binding monooxygenases ausB and ausC, and the dioxygenase ausE. Acid-catalyzed keto-rearrangement and ring contraction of the tetraketide portion of preaustinoid A3 by ausJ lead to the formation of preaustinoid A4. The aldo-keto reductase ausK, with the help of ausH, is involved in the next step by transforming preaustinoid A4 into isoaustinone which is in turn hydroxylated by the P450 monooxygenase ausI to form austinolide. The cytochrome P450 monooxygenase ausG then modifies austinolide to austinol. Austinol is further acetylated to austin by the O-acetyltransferase ausP, which spontaneously changes to dehydroaustin. The cytochrome P450 monooxygenase then converts dehydroaustin is into 7-dehydrodehydroaustin. The hydroxylation catalyzed by ausR permits the second O-acetyltransferase ausQ to add an additional acetyl group to the molecule, leading to the formation of acetoxydehydroaustin. Due to genetic rearrangements of the clusters and the subsequent loss of some enzymes, the end product of the Penicillium brasilianum austinoid biosynthesis clusters is acetoxydehydroaustin. The sequence is that of O-acyltransferase ausP from Penicillium brasilianum.